We begin with the raw amino-acid sequence, 79 residues long: Small ribosomal subunit protein uS11 (79 aa).

Phosphoserine is present on S14. Residues K59 and K61 each participate in a glycyl lysine isopeptide (Lys-Gly) (interchain with G-Cter in SUMO2) cross-link.

It belongs to the universal ribosomal protein uS11 family. In terms of assembly, component of the small ribosomal subunit. Part of the small subunit (SSU) processome, composed of more than 70 proteins and the RNA chaperone small nucleolar RNA (snoRNA) U3.

The protein localises to the cytoplasm. Its subcellular location is the nucleus. It is found in the nucleolus. In terms of biological role, component of the small ribosomal subunit. The ribosome is a large ribonucleoprotein complex responsible for the synthesis of proteins in the cell. Part of the small subunit (SSU) processome, first precursor of the small eukaryotic ribosomal subunit. During the assembly of the SSU processome in the nucleolus, many ribosome biogenesis factors, an RNA chaperone and ribosomal proteins associate with the nascent pre-rRNA and work in concert to generate RNA folding, modifications, rearrangements and cleavage as well as targeted degradation of pre-ribosomal RNA by the RNA exosome. The protein is Small ribosomal subunit protein uS11 (RPS14) of Sus scrofa (Pig).